Reading from the N-terminus, the 200-residue chain is MNKFTQHTGIPVPLDAANVDTDAIIPKQFLQKVTRTGFGKHLFHDWRFLDDEGTQPNPSFILNQPIYQDASILLARENFGCGSSREHAPWALTDYGFHAVIAPSFADIFYGNSFNNQLLPIKLSDEQVTQLFNWVTEHAGTPITVDLVAQQVIAGELCFSFEIDAFRRHCMIEGLDSIGLTLQHQAEISAYEAKQPAFMR.

The protein belongs to the LeuD family. LeuD type 1 subfamily. In terms of assembly, heterodimer of LeuC and LeuD.

The enzyme catalyses (2R,3S)-3-isopropylmalate = (2S)-2-isopropylmalate. It functions in the pathway amino-acid biosynthesis; L-leucine biosynthesis; L-leucine from 3-methyl-2-oxobutanoate: step 2/4. Its function is as follows. Catalyzes the isomerization between 2-isopropylmalate and 3-isopropylmalate, via the formation of 2-isopropylmaleate. The protein is 3-isopropylmalate dehydratase small subunit of Proteus mirabilis (strain HI4320).